Here is a 227-residue protein sequence, read N- to C-terminus: Ribonuclease 3 (227 aa).

Residues 5 to 127 form the RNase III domain; the sequence is YQKLSRRIGY…IIGAMYLDAG (123 aa). Glu40 lines the Mg(2+) pocket. Asp44 is an active-site residue. Asp113 and Glu116 together coordinate Mg(2+). Residue Glu116 is part of the active site. Residues 154–224 form the DRBM domain; it reads DAKTRLQEFL…AAKALKKLEK (71 aa).

Belongs to the ribonuclease III family. Homodimer. Requires Mg(2+) as cofactor.

It localises to the cytoplasm. It carries out the reaction Endonucleolytic cleavage to 5'-phosphomonoester.. Functionally, digests double-stranded RNA. Involved in the processing of primary rRNA transcript to yield the immediate precursors to the large and small rRNAs (23S and 16S). Processes some mRNAs, and tRNAs when they are encoded in the rRNA operon. Processes pre-crRNA and tracrRNA of type II CRISPR loci if present in the organism. This Marinomonas sp. (strain MWYL1) protein is Ribonuclease 3.